Consider the following 313-residue polypeptide: 2-oxoglutarate-dependent dioxygenase eupC (313 aa).

The 98-residue stretch at 187–284 folds into the Fe2OG dioxygenase domain; that stretch reads PSIPMRFLHY…LNAKALDGSG (98 aa). Fe cation-binding residues include His212, Asp214, and His263. A 2-oxoglutarate-binding site is contributed by Lys274.

Belongs to the iron/ascorbate-dependent oxidoreductase family. The cofactor is Fe(2+).

It functions in the pathway secondary metabolite biosynthesis; terpenoid biosynthesis. In terms of biological role, 2-oxoglutarate-dependent dioxygenase; part of the gene cluster that mediates the biosynthesis of eupenifeldin, a bistropolone meroterpenoid that acts as an antitumor agent. The first step of eupenifeldin biosynthesis is the biosynthesis of 3-methylorcinaldehyde performed by the non-reducing polyketide synthase eupA. Oxidative dearomatization of 3-methylorcinaldehyde likely catalyzed by the FAD-dependent monooxygenase eupB is followed by oxidative ring expansion by the 2-oxoglutarate-dependent dioxygenase eupC to provide the first tropolone metabolite, tropolone stipitaldehyde. In parallel, generation of sesquiterpene alpha-humulene from farnesylpyrophosphate (FPP) is catalyzed by the terpene cyclase eupE. The cytochrome P450 monooxygenase eupD then hydroxylates humulene to humulenol. The putative Diels-Alderase eupF probably catalyzes the formation of the tropolone-humulene skeleton by linking humulenol and the polyketide moiety. The short-chain dehydrogenase/reductase eupG and the flavin-dependent monooxygenase eupH are also essential for eupenifeldin biosynthesis and are likely the additional decorating enzymes of the tropolone-humulene skeleton to produce final eupenifeldin or derivatives. This Phoma sp protein is 2-oxoglutarate-dependent dioxygenase eupC.